We begin with the raw amino-acid sequence, 496 residues long: Amidophosphoribosyltransferase (496 aa).

Positions 1 to 21 (MNQSHSFPTDDPLDGDTLHEE) are excised as a propeptide. Catalysis depends on C22, which acts as the Nucleophile. One can recognise a Glutamine amidotransferase type-2 domain in the interval 22–241 (CGVFGILGHP…NGEVIICEIQ (220 aa)).

In the C-terminal section; belongs to the purine/pyrimidine phosphoribosyltransferase family.

It catalyses the reaction 5-phospho-beta-D-ribosylamine + L-glutamate + diphosphate = 5-phospho-alpha-D-ribose 1-diphosphate + L-glutamine + H2O. Its pathway is purine metabolism; IMP biosynthesis via de novo pathway; N(1)-(5-phospho-D-ribosyl)glycinamide from 5-phospho-alpha-D-ribose 1-diphosphate: step 1/2. Functionally, catalyzes the formation of phosphoribosylamine from phosphoribosylpyrophosphate (PRPP) and glutamine. This Rhizobium etli (strain ATCC 51251 / DSM 11541 / JCM 21823 / NBRC 15573 / CFN 42) protein is Amidophosphoribosyltransferase.